The chain runs to 193 residues: Probable nicotinate-nucleotide adenylyltransferase (193 aa).

The protein belongs to the NadD family.

The enzyme catalyses nicotinate beta-D-ribonucleotide + ATP + H(+) = deamido-NAD(+) + diphosphate. The protein operates within cofactor biosynthesis; NAD(+) biosynthesis; deamido-NAD(+) from nicotinate D-ribonucleotide: step 1/1. Functionally, catalyzes the reversible adenylation of nicotinate mononucleotide (NaMN) to nicotinic acid adenine dinucleotide (NaAD). The polypeptide is Probable nicotinate-nucleotide adenylyltransferase (Flavobacterium johnsoniae (strain ATCC 17061 / DSM 2064 / JCM 8514 / BCRC 14874 / CCUG 350202 / NBRC 14942 / NCIMB 11054 / UW101) (Cytophaga johnsonae)).